Reading from the N-terminus, the 376-residue chain is NAD-capped RNA hydrolase (376 aa).

4 residues coordinate Zn(2+): C182, C185, C200, and C211. Substrate is bound by residues Y222, 258-260, E274, E278, and E321; that span reads AGF. The Nudix hydrolase domain occupies 223–351; sequence PRTDPCVIMV…KDGPAPILFP (129 aa). Residues A258, E274, E278, and E321 each contribute to the Mg(2+) site. The Nudix box signature appears at 259 to 280; sequence GFLEPGESLEEAVVRETYEESG. The Microbody targeting signal motif lies at 374–376; that stretch reads VKM.

Belongs to the Nudix hydrolase family. NudC subfamily. In terms of assembly, homodimer. Requires Mg(2+) as cofactor. The cofactor is Zn(2+).

The catalysed reaction is a 5'-end NAD(+)-phospho-ribonucleoside in mRNA + H2O = a 5'-end phospho-adenosine-phospho-ribonucleoside in mRNA + beta-nicotinamide D-ribonucleotide + 2 H(+). The enzyme catalyses NAD(+) + H2O = beta-nicotinamide D-ribonucleotide + AMP + 2 H(+). It catalyses the reaction NADH + H2O = reduced beta-nicotinamide D-ribonucleotide + AMP + 2 H(+). In terms of biological role, mRNA decapping enzyme that specifically removes the nicotinamide adenine dinucleotide (NAD) cap from a subset of mRNAs by hydrolyzing the diphosphate linkage to produce nicotinamide mononucleotide (NMN) and 5' monophosphate mRNA. The NAD-cap is present at the 5'-end of some RNAs; in contrast to the canonical N7 methylguanosine (m7G) cap, the NAD cap promotes mRNA decay. Mediates the hydrolysis of some nucleoside diphosphate derivatives. The protein is NAD-capped RNA hydrolase of Schizosaccharomyces pombe (strain 972 / ATCC 24843) (Fission yeast).